Reading from the N-terminus, the 87-residue chain is Putative defensin-like protein 304 (87 aa).

Positions 1–19 (MKSNKVTFFLGLFLVSAFC) are cleaved as a signal peptide. 3 disulfides stabilise this stretch: Cys-27–Cys-46, Cys-33–Cys-51, and Cys-40–Cys-53.

It belongs to the DEFL family.

Its subcellular location is the secreted. In Arabidopsis thaliana (Mouse-ear cress), this protein is Putative defensin-like protein 304.